We begin with the raw amino-acid sequence, 469 residues long: uncharacterized protein (469 aa).

The next 3 membrane-spanning stretches (helical) occupy residues 42-62 (DVIIFLLLFFVAFNVSSAYVI), 179-199 (IVLPPGAVILSPQGTLLVTPS), and 249-269 (NLKYLLIIAIFGTAIFGGLFV).

Its subcellular location is the cell membrane. This is an uncharacterized protein from Methanocaldococcus jannaschii (strain ATCC 43067 / DSM 2661 / JAL-1 / JCM 10045 / NBRC 100440) (Methanococcus jannaschii).